The primary structure comprises 77 residues: Acyl carrier protein (77 aa).

Positions 2–77 constitute a Carrier domain; the sequence is STVEERVKKI…DAIDYILANQ (76 aa). Ser37 carries the O-(pantetheine 4'-phosphoryl)serine modification.

This sequence belongs to the acyl carrier protein (ACP) family. 4'-phosphopantetheine is transferred from CoA to a specific serine of apo-ACP by AcpS. This modification is essential for activity because fatty acids are bound in thioester linkage to the sulfhydryl of the prosthetic group.

The protein localises to the cytoplasm. It participates in lipid metabolism; fatty acid biosynthesis. Carrier of the growing fatty acid chain in fatty acid biosynthesis. This chain is Acyl carrier protein, found in Hahella chejuensis (strain KCTC 2396).